A 336-amino-acid chain; its full sequence is Ferrochelatase (336 aa).

Fe cation-binding residues include H206 and E287.

It belongs to the ferrochelatase family.

Its subcellular location is the cytoplasm. It carries out the reaction heme b + 2 H(+) = protoporphyrin IX + Fe(2+). The protein operates within porphyrin-containing compound metabolism; protoheme biosynthesis; protoheme from protoporphyrin-IX: step 1/1. In terms of biological role, catalyzes the ferrous insertion into protoporphyrin IX. This Neisseria gonorrhoeae (strain ATCC 700825 / FA 1090) protein is Ferrochelatase.